We begin with the raw amino-acid sequence, 273 residues long: Pantothenate synthetase (273 aa).

27 to 34 (MGALHDGH) provides a ligand contact to ATP. Residue His34 is the Proton donor of the active site. Residue Gln58 coordinates (R)-pantoate. Position 58 (Gln58) interacts with beta-alanine. 144–147 (GKKD) lines the ATP pocket. Position 150 (Gln150) interacts with (R)-pantoate. ATP is bound by residues Val173 and 181 to 184 (LSSR).

Belongs to the pantothenate synthetase family. In terms of assembly, homodimer.

It localises to the cytoplasm. The enzyme catalyses (R)-pantoate + beta-alanine + ATP = (R)-pantothenate + AMP + diphosphate + H(+). It participates in cofactor biosynthesis; (R)-pantothenate biosynthesis; (R)-pantothenate from (R)-pantoate and beta-alanine: step 1/1. Its function is as follows. Catalyzes the condensation of pantoate with beta-alanine in an ATP-dependent reaction via a pantoyl-adenylate intermediate. This is Pantothenate synthetase from Campylobacter concisus (strain 13826).